Consider the following 194-residue polypeptide: MYICFEGIDGSGKTTHAALTASWLRENGYMVHEVREPTDSNIGSLIRSMLSSPDARTPDVQRMLALLFAADRLTLRSKIEGDWAEDVVVSDRCYYSSMVYQGPEEWVCEINRFAPRPDVVILLDIDVEVAMERCGGTDEFEDPLYLAGVRERYLELADKNGFYTVNAERGVNLIQRDIRRILAPHFGICSGGIM.

ATP is bound at residue Gly-7–Thr-14.

The protein belongs to the thymidylate kinase family.

The catalysed reaction is dTMP + ATP = dTDP + ADP. This is Probable thymidylate kinase (tmk) from Methanothermobacter thermautotrophicus (strain ATCC 29096 / DSM 1053 / JCM 10044 / NBRC 100330 / Delta H) (Methanobacterium thermoautotrophicum).